A 316-amino-acid polypeptide reads, in one-letter code: Mitochondrial GTPase 1 (316 aa).

A CP-type G domain is found at 28–203 (MKQMQQKLKQ…LLDTPGILKP (176 aa)). GTP is bound by residues 73–76 (NKKD), 147–152 (NVGKSS), and Gly-199.

It belongs to the TRAFAC class YlqF/YawG GTPase family. MTG1 subfamily.

The protein localises to the mitochondrion inner membrane. Functionally, plays a role in the regulation of the mitochondrial ribosome assembly and of translational activity. Displays mitochondrial GTPase activity. The sequence is that of Mitochondrial GTPase 1 from Aedes aegypti (Yellowfever mosquito).